Reading from the N-terminus, the 200-residue chain is MSYLVPMVVEQTNRGERSYDIYSRLLKDRIIFLGSGIDDTVANLVIAQLLFLEAEDPDKDISLYINSPGGSITAGMAIYDTLQYIRPDVSTICVGLAASMGAFLLAAGKKGKRYALPNAEIMIHQPAGGTQGQATDIEIHARRIMNMKESLNKILAERTGQPLERIQKDTDRDYFMTAQEAKEYGIIDEVISHPKKTSKK.

The Nucleophile role is filled by Ser99. The active site involves His124.

Belongs to the peptidase S14 family. Fourteen ClpP subunits assemble into 2 heptameric rings which stack back to back to give a disk-like structure with a central cavity, resembling the structure of eukaryotic proteasomes.

The protein localises to the cytoplasm. It carries out the reaction Hydrolysis of proteins to small peptides in the presence of ATP and magnesium. alpha-casein is the usual test substrate. In the absence of ATP, only oligopeptides shorter than five residues are hydrolyzed (such as succinyl-Leu-Tyr-|-NHMec, and Leu-Tyr-Leu-|-Tyr-Trp, in which cleavage of the -Tyr-|-Leu- and -Tyr-|-Trp bonds also occurs).. In terms of biological role, cleaves peptides in various proteins in a process that requires ATP hydrolysis. Has a chymotrypsin-like activity. Plays a major role in the degradation of misfolded proteins. The protein is ATP-dependent Clp protease proteolytic subunit of Syntrophomonas wolfei subsp. wolfei (strain DSM 2245B / Goettingen).